A 413-amino-acid polypeptide reads, in one-letter code: Multifunctional CCA protein (413 aa).

Positions 8 and 11 each coordinate ATP. CTP contacts are provided by glycine 8 and arginine 11. Aspartate 21 and aspartate 23 together coordinate Mg(2+). Residues arginine 91, arginine 137, and arginine 140 each contribute to the ATP site. Positions 91, 137, and 140 each coordinate CTP. The 102-residue stretch at 228-329 (TGVHTLMTLS…VKLFDAIDAW (102 aa)) folds into the HD domain.

This sequence belongs to the tRNA nucleotidyltransferase/poly(A) polymerase family. Bacterial CCA-adding enzyme type 1 subfamily. Monomer. Can also form homodimers and oligomers. The cofactor is Mg(2+). Ni(2+) is required as a cofactor.

It catalyses the reaction a tRNA precursor + 2 CTP + ATP = a tRNA with a 3' CCA end + 3 diphosphate. The catalysed reaction is a tRNA with a 3' CCA end + 2 CTP + ATP = a tRNA with a 3' CCACCA end + 3 diphosphate. Catalyzes the addition and repair of the essential 3'-terminal CCA sequence in tRNAs without using a nucleic acid template. Adds these three nucleotides in the order of C, C, and A to the tRNA nucleotide-73, using CTP and ATP as substrates and producing inorganic pyrophosphate. tRNA 3'-terminal CCA addition is required both for tRNA processing and repair. Also involved in tRNA surveillance by mediating tandem CCA addition to generate a CCACCA at the 3' terminus of unstable tRNAs. While stable tRNAs receive only 3'-terminal CCA, unstable tRNAs are marked with CCACCA and rapidly degraded. The sequence is that of Multifunctional CCA protein from Salmonella paratyphi A (strain ATCC 9150 / SARB42).